The following is a 234-amino-acid chain: Sugar fermentation stimulation protein homolog (234 aa).

The protein belongs to the SfsA family.

This is Sugar fermentation stimulation protein homolog from Shewanella pealeana (strain ATCC 700345 / ANG-SQ1).